We begin with the raw amino-acid sequence, 30 residues long: Cysteine-rich venom protein annuliferin-a (30 aa).

This sequence belongs to the CRISP family. Post-translationally, contains 8 disulfide bonds. Expressed by the venom gland.

The protein localises to the secreted. Its function is as follows. Inhibits calcium-activated potassium channels (KCa), voltage-gated potassium channel (Kv), and the calcium release channel/ryanodine receptor (RyR). The polypeptide is Cysteine-rich venom protein annuliferin-a (Naja annulifera (Banded Egyptian cobra)).